A 448-amino-acid polypeptide reads, in one-letter code: N-succinylarginine dihydrolase (448 aa).

Residues 19 to 28 (AGLSSGNIAS), Asn110, and 137 to 138 (HR) contribute to the substrate site. Glu174 is an active-site residue. Arg216 is a substrate binding site. The active site involves His252. Residues Asp254 and Asn366 each contribute to the substrate site. Cys372 acts as the Nucleophile in catalysis.

It belongs to the succinylarginine dihydrolase family. As to quaternary structure, homodimer.

The catalysed reaction is N(2)-succinyl-L-arginine + 2 H2O + 2 H(+) = N(2)-succinyl-L-ornithine + 2 NH4(+) + CO2. It participates in amino-acid degradation; L-arginine degradation via AST pathway; L-glutamate and succinate from L-arginine: step 2/5. In terms of biological role, catalyzes the hydrolysis of N(2)-succinylarginine into N(2)-succinylornithine, ammonia and CO(2). The sequence is that of N-succinylarginine dihydrolase from Legionella pneumophila (strain Lens).